The following is a 296-amino-acid chain: SPbeta prophage-derived endonuclease YokF (296 aa).

The signal sequence occupies residues Met-1–Ala-19. Residue Cys-20 is the site of N-palmitoyl cysteine attachment. The S-diacylglycerol cysteine moiety is linked to residue Cys-20. The interval Cys-20–Lys-65 is disordered. The span at Asp-24–Lys-65 shows a compositional bias: basic and acidic residues. A TNase-like domain is found at Glu-66–Lys-199. Asp-79 lines the Ca(2+) pocket. The active site involves Arg-93. Asp-98 and Thr-99 together coordinate Ca(2+). Catalysis depends on residues Glu-101 and Arg-144. A disordered region spans residues Ala-218–Arg-296. The span at Val-219–Thr-244 shows a compositional bias: low complexity. The segment covering Lys-284–Arg-296 has biased composition (basic and acidic residues).

It depends on Ca(2+) as a cofactor. Requires Cu(2+) as cofactor. Mn(2+) serves as cofactor.

Its subcellular location is the cell membrane. With respect to regulation, inhibited by aurintricalboxylic acid but not by Zn(2+), Mn(2+), Hg(2+), 2-mercaptoethanol and sodium citrate. Neither inhibited nor activated by ATP. In terms of biological role, catalyzes the hydrolysis of supercoiled double and single strand DNA and RNA. Involved in chromosomal DNA degradation and cell death caused by thermal stress. This chain is SPbeta prophage-derived endonuclease YokF (yokF), found in Bacillus subtilis (strain 168).